The following is a 463-amino-acid chain: Glutamate--tRNA ligase 2 (463 aa).

A 'HIGH' region motif is present at residues 11–21 (PSPTGYLHIGG). The 'KMSKS' region signature appears at 240 to 244 (KLSKR). Lys-243 serves as a coordination point for ATP.

The protein belongs to the class-I aminoacyl-tRNA synthetase family. Glutamate--tRNA ligase type 1 subfamily. Monomer.

The protein resides in the cytoplasm. The enzyme catalyses tRNA(Glu) + L-glutamate + ATP = L-glutamyl-tRNA(Glu) + AMP + diphosphate. Catalyzes the attachment of glutamate to tRNA(Glu) in a two-step reaction: glutamate is first activated by ATP to form Glu-AMP and then transferred to the acceptor end of tRNA(Glu). The polypeptide is Glutamate--tRNA ligase 2 (Campylobacter jejuni subsp. jejuni serotype O:6 (strain 81116 / NCTC 11828)).